The following is a 918-amino-acid chain: Glutamate receptor 2.5 (918 aa).

Positions 1–30 (MSLFHHLVSRFLSLWLLIFLVFLVLSLGKS) are cleaved as a signal peptide. Residues 31 to 586 (QKEALQVKVG…WVFLKPLTKE (556 aa)) are Extracellular-facing. Asn-46, Asn-58, Asn-122, Asn-336, Asn-340, and Asn-546 each carry an N-linked (GlcNAc...) asparagine glycan. Residues 587 to 607 (LWLVTAASFLYIGIMVWIFEY) traverse the membrane as a helical segment. The Cytoplasmic segment spans residues 608 to 616 (QADEEFREQ). A helical membrane pass occupies residues 617 to 637 (MIIDKISSVFYFSFSTLFFAH). Topologically, residues 638-647 (RRPSESFFTR) are cytoplasmic. A helical transmembrane segment spans residues 648–668 (VLVVVWCFVLLILTQSYTATL). Over 669–828 (TSMLTVQELR…DSPIQLDHHS (160 aa)) the chain is Extracellular. The N-linked (GlcNAc...) asparagine glycan is linked to Asn-791. The chain crosses the membrane as a helical span at residues 829–849 (FEALFLIVFVVSVILLLLMLA). Topologically, residues 850 to 918 (SRGYQERQHN…VAPLSRLKSA (69 aa)) are cytoplasmic. The interval 857–881 (QHNASPNLPNDQANAAQEEVNEEGN) is disordered. Residues 866–881 (NDQANAAQEEVNEEGN) are compositionally biased toward low complexity.

Belongs to the glutamate-gated ion channel (TC 1.A.10.1) family. May form heteromers. In terms of tissue distribution, expressed predominantly in roots.

The protein resides in the membrane. Its function is as follows. Glutamate-gated receptor that probably acts as a non-selective cation channel. May be involved in light-signal transduction and calcium homeostasis via the regulation of calcium influx into cells. The sequence is that of Glutamate receptor 2.5 (GLR2.5) from Arabidopsis thaliana (Mouse-ear cress).